The primary structure comprises 184 residues: Shikimate kinase (184 aa).

Gly-20 to Arg-25 contributes to the ATP binding site. Ser-24 lines the Mg(2+) pocket. 3 residues coordinate substrate: Asp-42, Arg-66, and Gly-88. Arg-127 lines the ATP pocket. Arg-146 provides a ligand contact to substrate. An ATP-binding site is contributed by Arg-162.

This sequence belongs to the shikimate kinase family. As to quaternary structure, monomer. Mg(2+) serves as cofactor.

The protein resides in the cytoplasm. It carries out the reaction shikimate + ATP = 3-phosphoshikimate + ADP + H(+). It participates in metabolic intermediate biosynthesis; chorismate biosynthesis; chorismate from D-erythrose 4-phosphate and phosphoenolpyruvate: step 5/7. In terms of biological role, catalyzes the specific phosphorylation of the 3-hydroxyl group of shikimic acid using ATP as a cosubstrate. The sequence is that of Shikimate kinase from Thermus thermophilus (strain ATCC 27634 / DSM 579 / HB8).